A 136-amino-acid polypeptide reads, in one-letter code: Aspartate 1-decarboxylase (136 aa).

The active-site Schiff-base intermediate with substrate; via pyruvic acid is Ser25. Ser25 is subject to Pyruvic acid (Ser). Residue Thr57 participates in substrate binding. Tyr58 functions as the Proton donor in the catalytic mechanism. Residue 73–75 (GAA) coordinates substrate.

Belongs to the PanD family. Heterooctamer of four alpha and four beta subunits. The cofactor is pyruvate. In terms of processing, is synthesized initially as an inactive proenzyme, which is activated by self-cleavage at a specific serine bond to produce a beta-subunit with a hydroxyl group at its C-terminus and an alpha-subunit with a pyruvoyl group at its N-terminus.

The protein resides in the cytoplasm. It catalyses the reaction L-aspartate + H(+) = beta-alanine + CO2. It functions in the pathway cofactor biosynthesis; (R)-pantothenate biosynthesis; beta-alanine from L-aspartate: step 1/1. Catalyzes the pyruvoyl-dependent decarboxylation of aspartate to produce beta-alanine. This chain is Aspartate 1-decarboxylase, found in Mycolicibacterium smegmatis (strain ATCC 700084 / mc(2)155) (Mycobacterium smegmatis).